The following is an 857-amino-acid chain: MGETRRHSVDVPITRTLVALRRVRSLRDPCTTSMSKFASLLDNVKWETGSNNGISLQFVEHADDACKAAADAPVGLIPFGSYSIMEELESGCDLHKLSSKVINVEGDACSRSSERSCSDLSVKGRDLACNAPSISHVEEAGSGGRYRTHYSTKLASSVGEYGSRLGSPMNSTNHSYYGDEDVDFDSQSNRGCGITYCWSRTPRYRGSNQSSDVEEYPLLPGNGNGESDVVTPSHEVLSRSLSQKFRPKSFDELVGQEVVVKCLLSTILRGRITSVYLFHGPRGTGKTSTSKIFAAALNCLSQAAHSRPCGLCSECKSYFSGRGRDVMETDSGKLNRPSYLRSLIKSASLPPVSSRFKVFIIDECQLLCQETWGTLLNSLDNFSQHSVFILVTSELEKLPRNVLSRSQKYHFSKVCDADISTKLAKICIEEGIDFDQGAVDFIASKSDGSLRDAEIMLDQLSLLGKRITTSLAYKLIGVVSDDELLDLLDLAMSSDTSNTVIRARELMRSKIDPMQLISQLANVIMDIIAGNSQESSSATRLRFLTRHTSEEEMQKLRNALKILSDAEKHLRASKNQTTWLTVALLQLSNTDSSSFATDENGRNQINKDVELSSTSSGCPGDVIKSDAEKGQERNCNETVESVWKTVTDLCCSDSLKRFLWKRGRLTSLTVDKGVAIAELEFYTPQHVARAEKSWKLIADSFQSVLGCNVEIQMNLVISACSPPKSAKAAASLFFGLFSCSRRMLHKSYLTTRTDSDCASEKPAVTNSLRSCQGNVLRARSVRSSANASSRMSCSSDQGDATSAMCTPHIPPGEKRPEDDTDVLCWKKTPLGKGQSETQNSKSSRLIGRVLPCSTAAN.

Residue 280-287 (GPRGTGKT) coordinates ATP. Residues cysteine 299, cysteine 309, cysteine 312, and cysteine 315 each coordinate Zn(2+). Residues 544–576 (LTRHTSEEEMQKLRNALKILSDAEKHLRASKNQ) are a coiled coil. 2 disordered regions span residues 593–629 (SSFA…DAEK) and 787–845 (ASSR…SSRL). Basic and acidic residues predominate over residues 599 to 610 (ENGRNQINKDVE). The segment covering 834–843 (QSETQNSKSS) has biased composition (polar residues).

The protein belongs to the DnaX/STICHEL family.

In Arabidopsis thaliana (Mouse-ear cress), this protein is Protein STICHEL-like 2.